The primary structure comprises 349 residues: Large ribosomal subunit protein uL2mz, N-terminal part (349 aa).

Belongs to the universal ribosomal protein uL2 family. Component of the mitochondrial ribosome large subunit.

The protein resides in the mitochondrion. The protein is Large ribosomal subunit protein uL2mz, N-terminal part of Arabidopsis thaliana (Mouse-ear cress).